We begin with the raw amino-acid sequence, 258 residues long: Clathrin light chain 3 (258 aa).

Over residues 1–18 (MSSTLSNEESGLGDSNRS) the composition is skewed to polar residues. The tract at residues 1–96 (MSSTLSNEES…PPPSAMEKEE (96 aa)) is disordered. Ser2 carries the N-acetylserine modification. A compositionally biased stretch (low complexity) spans 34-50 (SRFQSQRFDSSFSNFDS). Residues 66 to 79 (RPETQSPPSINSFD) show a composition bias toward polar residues. The tract at residues 90–152 (SAMEKEEGFA…TIENNKKLNR (63 aa)) is involved in binding clathrin heavy chain. The stretch at 105–164 (RLNALRLEEKEKEEKEMVQQILEAAEQYKAEFYSKRNVTIENNKKLNREKEKFFLENQEK) forms a coiled coil. The span at 224-234 (LKHNPPTHMKP) shows a compositional bias: basic residues. The segment at 224–258 (LKHNPPTHMKPKLPSPSGADPNVSVSEQVTVTEKL) is disordered. Polar residues predominate over residues 246–258 (VSVSEQVTVTEKL).

It belongs to the clathrin light chain family. As to quaternary structure, clathrin coats are formed from molecules containing 3 heavy chains and 3 light chains.

It is found in the cytoplasmic vesicle membrane. It localises to the membrane. The protein resides in the coated pit. Its function is as follows. Clathrin is the major protein of the polyhedral coat of coated pits and vesicles. This is Clathrin light chain 3 from Arabidopsis thaliana (Mouse-ear cress).